Here is a 111-residue protein sequence, read N- to C-terminus: Fluoride-specific ion channel FluC (111 aa).

A run of 3 helical transmembrane segments spans residues 2–22 (GLLL…RFAL), 36–56 (GILL…AFLI), and 71–91 (FLLV…SLDI). Na(+) contacts are provided by Gly-79 and Thr-82.

This sequence belongs to the fluoride channel Fluc/FEX (TC 1.A.43) family.

It is found in the cell inner membrane. It catalyses the reaction fluoride(in) = fluoride(out). Na(+) is not transported, but it plays an essential structural role and its presence is essential for fluoride channel function. Functionally, fluoride-specific ion channel. Important for reducing fluoride concentration in the cell, thus reducing its toxicity. The chain is Fluoride-specific ion channel FluC from Francisella tularensis subsp. holarctica (strain FTNF002-00 / FTA).